The primary structure comprises 192 residues: Der GTPase-activating protein YihI (192 aa).

The segment at 1–80 (MSRTKKTRRI…KAAVKEVKDP (80 aa)) is disordered. Composition is skewed to basic and acidic residues over residues 9-25 (RITD…KPEQ), 37-48 (TRYELDAKAREE), and 65-80 (DPAE…VKDP).

This sequence belongs to the YihI family. As to quaternary structure, interacts with Der.

Functionally, a GTPase-activating protein (GAP) that modifies Der/EngA GTPase function. May play a role in ribosome biogenesis. This Actinobacillus pleuropneumoniae serotype 7 (strain AP76) protein is Der GTPase-activating protein YihI.